A 353-amino-acid polypeptide reads, in one-letter code: Rhodopsin (353 aa).

Over 1–36 (MNGTEGPYFYIPMLNTTGIVRSPYEYPQYYLVNPAA) the chain is Extracellular. Residues Asn-2 and Asn-15 are each glycosylated (N-linked (GlcNAc...) asparagine). The helical transmembrane segment at 37-61 (YAALCAYMFLLILLGFPINFLTLYV) threads the bilayer. At 62–73 (TIEHKKLRTPLN) the chain is on the cytoplasmic side. A helical transmembrane segment spans residues 74 to 96 (YILLNLAVANLFMVFGGFTTTMY). The Extracellular portion of the chain corresponds to 97-110 (TSMHGYFVLGRLGC). The cysteines at positions 110 and 187 are disulfide-linked. The helical transmembrane segment at 111 to 133 (NLEGFFATLGGEIGLWSLVVLAV) threads the bilayer. The short motif at 134 to 136 (ERW) is the 'Ionic lock' involved in activated form stabilization element. The Cytoplasmic portion of the chain corresponds to 134-152 (ERWMVVCKPISNFRFTENH). The chain crosses the membrane as a helical span at residues 153–173 (AIMGLGFTWFAASACAVPPLV). The Extracellular portion of the chain corresponds to 174–202 (GWSRYIPEGMQCSCGVDYYTRAEGFNNES). Asn-200 carries an N-linked (GlcNAc...) asparagine glycan. A helical transmembrane segment spans residues 203 to 224 (FVVYMFVCHFLIPLIVVFFCYG). The Cytoplasmic portion of the chain corresponds to 225–252 (RLLCAVKEAAAAQQESETTQRAEREVTR). The chain crosses the membrane as a helical span at residues 253–274 (MVVIMVIAFLICWCPYAGVAWY). The Extracellular segment spans residues 275–286 (IFSNQGSEFGPL). A helical transmembrane segment spans residues 287 to 308 (FMTIPAFFAKSSSIYNPLIYIF). Lys-296 carries the post-translational modification N6-(retinylidene)lysine. The Cytoplasmic portion of the chain corresponds to 309–353 (MNKQFRHCMITTLCCGKNPFEEEEGSTTTSKTEASSASSSSVSPA). 2 S-palmitoyl cysteine lipidation sites follow: Cys-322 and Cys-323. Residues 329 to 353 (EEEEGSTTTSKTEASSASSSSVSPA) are disordered. Positions 334–353 (STTTSKTEASSASSSSVSPA) are enriched in low complexity.

The protein belongs to the G-protein coupled receptor 1 family. Opsin subfamily. In terms of processing, phosphorylated on some or all of the serine and threonine residues present in the C-terminal region. Post-translationally, contains one covalently linked retinal chromophore.

Its subcellular location is the membrane. It is found in the cell projection. It localises to the cilium. The protein localises to the photoreceptor outer segment. Its function is as follows. Photoreceptor required for image-forming vision at low light intensity. While most salt water fish species use retinal as chromophore, most freshwater fish use 3-dehydroretinal, or a mixture of retinal and 3-dehydroretinal. Light-induced isomerization of 11-cis to all-trans retinal triggers a conformational change that activates signaling via G-proteins. Subsequent receptor phosphorylation mediates displacement of the bound G-protein alpha subunit by arrestin and terminates signaling. This is Rhodopsin (rho) from Solea solea (Common sole).